The primary structure comprises 280 residues: 2-dehydro-3-deoxyphosphooctonate aldolase (280 aa).

This sequence belongs to the KdsA family.

The protein resides in the cytoplasm. The enzyme catalyses D-arabinose 5-phosphate + phosphoenolpyruvate + H2O = 3-deoxy-alpha-D-manno-2-octulosonate-8-phosphate + phosphate. Its pathway is carbohydrate biosynthesis; 3-deoxy-D-manno-octulosonate biosynthesis; 3-deoxy-D-manno-octulosonate from D-ribulose 5-phosphate: step 2/3. It functions in the pathway bacterial outer membrane biogenesis; lipopolysaccharide biosynthesis. This is 2-dehydro-3-deoxyphosphooctonate aldolase from Desulfotalea psychrophila (strain LSv54 / DSM 12343).